Reading from the N-terminus, the 1203-residue chain is Plasma membrane calcium-transporting ATPase 4 (1203 aa).

Topologically, residues Met1–Thr92 are cytoplasmic. At Ser13 the chain carries Phosphoserine. A helical transmembrane segment spans residues Phe93–Ala113. The Extracellular portion of the chain corresponds to Ile114–Ile150. Residues Glu151–Trp171 traverse the membrane as a helical segment. Topologically, residues Ser172–Leu356 are cytoplasmic. The tract at residues Asp294–Val319 is disordered. Phosphoserine is present on residues Ser328 and Ser334. A disordered region spans residues Glu330 to Lys349. Residues Ser334–Lys349 show a composition bias toward basic and acidic residues. Residues Thr357–Leu376 traverse the membrane as a helical segment. At Ile377 to Phe409 the chain is on the extracellular side. A helical transmembrane segment spans residues Phe410–Leu427. Topologically, residues Ala428 to Ile840 are cytoplasmic. The active-site 4-aspartylphosphate intermediate is Asp465. Mg(2+) contacts are provided by Asp785 and Asp789. Residues Ser841–Ser860 traverse the membrane as a helical segment. At Gly861 to Leu870 the chain is on the extracellular side. A helical transmembrane segment spans residues Lys871–Ala891. Residues Thr892–Leu911 are Cytoplasmic-facing. A helical transmembrane segment spans residues Ile912–Leu934. The Extracellular segment spans residues Val935–Leu952. A helical membrane pass occupies residues Asn953 to Asn974. The Cytoplasmic segment spans residues Glu975 to Arg993. A helical transmembrane segment spans residues Asn994–Gly1015. The Extracellular portion of the chain corresponds to Gly1016–Thr1025. Residues Met1026 to Ser1047 form a helical membrane-spanning segment. Topologically, residues Ala1048–Val1203 are cytoplasmic. Residues Ser1064 and Ser1070 each carry the phosphoserine modification. A calmodulin-binding subdomain A region spans residues Leu1086 to Gln1103. A Phosphothreonine; by PKC modification is found at Thr1102. At Gln1103 the chain carries Phosphoserine. Positions Ile1104–Phe1113 are calmodulin-binding subdomain B. Residues Arg1114, Asp1115, Ile1126, and Ser1144 each carry the phosphoserine modification.

Belongs to the cation transport ATPase (P-type) (TC 3.A.3) family. Type IIB subfamily. As to quaternary structure, interacts with PDZD11. Interacts with SLC35G1 and STIM1. Interacts with calmodulin. As to expression, ubiquitously expressed. Not detected in liver. The highest levels are found in uterus and stomach. Isoform XA is found in uterus, brain, stomach, small intestine, colon and pancreas. Isoform XB is found in uterus, skeletal muscle, lung, kidney, spleen, stomach, small intestine and pancreas. Isoform ZA is found in testis and isoform ZB is found in testis and heart.

It is found in the cell membrane. Its subcellular location is the cell projection. The protein localises to the cilium. The protein resides in the flagellum membrane. The catalysed reaction is Ca(2+)(in) + ATP + H2O = Ca(2+)(out) + ADP + phosphate + H(+). Its activity is regulated as follows. Activated by calcium/calmodulin. Calcium/calmodulin-regulated and magnesium-dependent enzyme that catalyzes the hydrolysis of ATP coupled with the transport of calcium out of the cell. By regulating sperm cell calcium homeostasis, may play a role in sperm motility. In Rattus norvegicus (Rat), this protein is Plasma membrane calcium-transporting ATPase 4.